The sequence spans 124 residues: Small ribosomal subunit protein uS12 (124 aa).

The segment at 1 to 26 is disordered; it reads MPTISQLVGSERKRLTKKTKSPALKA. Asp89 bears the 3-methylthioaspartic acid mark. The disordered stretch occupies residues 104–124; it reads TAGVKDRRQSRSKYGAKAPKD.

The protein belongs to the universal ribosomal protein uS12 family. In terms of assembly, part of the 30S ribosomal subunit. Contacts proteins S8 and S17. May interact with IF1 in the 30S initiation complex.

Functionally, with S4 and S5 plays an important role in translational accuracy. Interacts with and stabilizes bases of the 16S rRNA that are involved in tRNA selection in the A site and with the mRNA backbone. Located at the interface of the 30S and 50S subunits, it traverses the body of the 30S subunit contacting proteins on the other side and probably holding the rRNA structure together. The combined cluster of proteins S8, S12 and S17 appears to hold together the shoulder and platform of the 30S subunit. The sequence is that of Small ribosomal subunit protein uS12 from Prochlorococcus marinus (strain MIT 9215).